The following is a 328-amino-acid chain: Interleukin-12 subunit beta (328 aa).

Positions 1–22 (MCHQQLVISWFSLVFLASPLVA) are cleaved as a signal peptide. Positions 23 to 106 (IWELKKDVYV…LSHSLLLLHK (84 aa)) constitute an Ig-like C2-type domain. 3 disulfide bridges follow: C50/C90, C131/C142, and C170/C193. N135 carries an N-linked (GlcNAc...) asparagine glycan. N-linked (GlcNAc...) asparagine glycosylation is present at N222. The Fibronectin type-III domain maps to 237-328 (PPKNLQLKPL…WSEWASVPCS (92 aa)). C300 and C327 are disulfide-bonded. W319 carries a C-linked (Man) tryptophan glycan.

It belongs to the IL-12B family. As to quaternary structure, heterodimer with IL12A; disulfide-linked. The heterodimer is known as interleukin IL-12. Heterodimer with IL23A; disulfide-linked. The heterodimer is known as interleukin IL-23. Also secreted as a monomer. Interacts with NBR1; this interaction promotes IL-12 secretion. Post-translationally, known to be C-mannosylated in the recombinant protein; it is not yet known for sure if the wild-type protein is also modified.

The protein resides in the secreted. In terms of biological role, cytokine that can act as a growth factor for activated T and NK cells, enhance the lytic activity of NK/lymphokine-activated killer cells, and stimulate the production of IFN-gamma by resting PBMC. Functionally, associates with IL23A to form the IL-23 interleukin, a heterodimeric cytokine which functions in innate and adaptive immunity. IL-23 may constitute with IL-17 an acute response to infection in peripheral tissues. IL-23 binds to a heterodimeric receptor complex composed of IL12RB1 and IL23R, activates the Jak-Stat signaling cascade, stimulates memory rather than naive T-cells and promotes production of pro-inflammatory cytokines. IL-23 induces autoimmune inflammation and thus may be responsible for autoimmune inflammatory diseases and may be important for tumorigenesis. This chain is Interleukin-12 subunit beta (IL12B), found in Homo sapiens (Human).